Consider the following 510-residue polypeptide: ATP synthase subunit alpha (510 aa).

Position 169–176 (169–176) interacts with ATP; sequence GDRQTGKT.

This sequence belongs to the ATPase alpha/beta chains family. F-type ATPases have 2 components, CF(1) - the catalytic core - and CF(0) - the membrane proton channel. CF(1) has five subunits: alpha(3), beta(3), gamma(1), delta(1), epsilon(1). CF(0) has three main subunits: a(1), b(2) and c(9-12). The alpha and beta chains form an alternating ring which encloses part of the gamma chain. CF(1) is attached to CF(0) by a central stalk formed by the gamma and epsilon chains, while a peripheral stalk is formed by the delta and b chains.

Its subcellular location is the cell inner membrane. It catalyses the reaction ATP + H2O + 4 H(+)(in) = ADP + phosphate + 5 H(+)(out). Functionally, produces ATP from ADP in the presence of a proton gradient across the membrane. The alpha chain is a regulatory subunit. This Nitrobacter winogradskyi (strain ATCC 25391 / DSM 10237 / CIP 104748 / NCIMB 11846 / Nb-255) protein is ATP synthase subunit alpha.